The sequence spans 225 residues: Probable methylthioribulose-1-phosphate dehydratase (225 aa).

Substrate is bound at residue Cys86. 2 residues coordinate Zn(2+): His104 and His106. The active-site Proton donor/acceptor is the Glu127. Residue His183 coordinates Zn(2+).

It belongs to the aldolase class II family. MtnB subfamily. Zn(2+) is required as a cofactor.

It is found in the cytoplasm. The catalysed reaction is 5-(methylsulfanyl)-D-ribulose 1-phosphate = 5-methylsulfanyl-2,3-dioxopentyl phosphate + H2O. It functions in the pathway amino-acid biosynthesis; L-methionine biosynthesis via salvage pathway; L-methionine from S-methyl-5-thio-alpha-D-ribose 1-phosphate: step 2/6. In terms of biological role, catalyzes the dehydration of methylthioribulose-1-phosphate (MTRu-1-P) into 2,3-diketo-5-methylthiopentyl-1-phosphate (DK-MTP-1-P). This is Probable methylthioribulose-1-phosphate dehydratase from Leishmania braziliensis.